The following is a 329-amino-acid chain: uncharacterized protein (329 aa).

A signal peptide spans 1–22 (MPLCNNFSGNLVVAVALFFAGA).

This is an uncharacterized protein from Arabidopsis thaliana (Mouse-ear cress).